The chain runs to 215 residues: MRVILLGAPGAGKGTQARFITEKFGIPQISTGDMLRAAVKAGSPLGQQVKGVMDSGGLVSDDIIIALIKERITEADCAKGFLFDGFPRTIPQAEALKDAGVTIDHVVEIAVDDEEIVSRIAGRRVHPASGRVYHTEHNPPKVAGKDDVTGEDLIQREDDKEETVRHRLSVYHSQTKPLVDFYQKLSAAEGTPKYHSIAGVGSVEQITAKVLSALS.

ATP is bound at residue 10–15 (GAGKGT). The interval 30 to 59 (STGDMLRAAVKAGSPLGQQVKGVMDSGGLV) is NMP. Residues Thr-31, Arg-36, 57–59 (GLV), 85–88 (GFPR), and Gln-92 each bind AMP. The segment at 122-159 (GRRVHPASGRVYHTEHNPPKVAGKDDVTGEDLIQREDD) is LID. Residues Arg-123 and 132-133 (VY) each bind ATP. Positions 156 and 167 each coordinate AMP. ATP is bound at residue Gly-201.

It belongs to the adenylate kinase family. Monomer.

The protein localises to the cytoplasm. The enzyme catalyses AMP + ATP = 2 ADP. Its pathway is purine metabolism; AMP biosynthesis via salvage pathway; AMP from ADP: step 1/1. Its function is as follows. Catalyzes the reversible transfer of the terminal phosphate group between ATP and AMP. Plays an important role in cellular energy homeostasis and in adenine nucleotide metabolism. The chain is Adenylate kinase from Pseudomonas paraeruginosa (strain DSM 24068 / PA7) (Pseudomonas aeruginosa (strain PA7)).